A 354-amino-acid chain; its full sequence is Tryptophan--tRNA ligase (354 aa).

Residues 13–15 (QPT) and 21–22 (GN) each bind ATP. The short motif at 14 to 22 (PTGNLHLGN) is the 'HIGH' region element. D137 serves as a coordination point for L-tryptophan. Residues 149-151 (GDD), V208, and 217-221 (KMSKS) each bind ATP. The 'KMSKS' region motif lies at 217-221 (KMSKS).

This sequence belongs to the class-I aminoacyl-tRNA synthetase family. As to quaternary structure, homodimer.

The protein resides in the cytoplasm. It catalyses the reaction tRNA(Trp) + L-tryptophan + ATP = L-tryptophyl-tRNA(Trp) + AMP + diphosphate + H(+). In terms of biological role, catalyzes the attachment of tryptophan to tRNA(Trp). The sequence is that of Tryptophan--tRNA ligase from Rhizobium meliloti (strain 1021) (Ensifer meliloti).